The chain runs to 313 residues: uncharacterized protein (313 aa).

Helical transmembrane passes span 16-36 (AGTWVMIGILGLTMVGFAFLA), 106-126 (FTILTGLFTIIIAAGIVANEF), 155-175 (FGLLLLLILFIGSTLLGLIFF), 208-228 (LSESVSALMVATMAFMLSAVF), 233-253 (LAVGFSIFLLVAGTTATAFIA), and 286-306 (FSLVMLAIYFIIFLLLAFGIF).

The protein resides in the cell membrane. This is an uncharacterized protein from Bacillus subtilis (strain 168).